Here is a 422-residue protein sequence, read N- to C-terminus: 5-hydroxytryptamine receptor 1A (422 aa).

The disordered stretch occupies residues 1–23; the sequence is MDVLSPGQGNNTTSPPAPFETGG. Residues 1–38 lie on the Extracellular side of the membrane; the sequence is MDVLSPGQGNNTTSPPAPFETGGNTTGISDVTVSYQVI. Asparagine 10, asparagine 11, and asparagine 24 each carry an N-linked (GlcNAc...) asparagine glycan. The helical transmembrane segment at 39 to 59 threads the bilayer; sequence TSLLLGTLIFCAVLGNACVVA. Topologically, residues 60–73 are cytoplasmic; it reads AIALERSLQNVANY. A helical transmembrane segment spans residues 74–98; that stretch reads LIGSLAVTDLMVSVLVLPMAALYQV. The Extracellular portion of the chain corresponds to 99–107; the sequence is LNKWTLGQV. Residues 108–132 form a helical membrane-spanning segment; sequence TCDLFIALDVLCCTSSILHLCAIAL. The cysteines at positions 109 and 187 are disulfide-linked. The serotonin site is built by aspartate 116 and cysteine 120. Positions 133–135 match the DRY motif; important for ligand-induced conformation changes motif; it reads DRY. Topologically, residues 133–152 are cytoplasmic; sequence DRYWAITDPIDYVNKRTPRR. Residues 153–174 form a helical membrane-spanning segment; sequence AAALISLTWLIGFLISIPPMLG. The Extracellular portion of the chain corresponds to 175-193; the sequence is WRTPEDRSDPDACTISKDH. A helical transmembrane segment spans residues 194–216; it reads GYTIYSTFGAFYIPLLLMLVLYG. Over 217 to 346 the chain is Cytoplasmic; it reads RIFRAARFRI…LARERKTVKT (130 aa). The tract at residues 235–262 is disordered; that stretch reads KTGADTRHGASPAPQPKKSVNGESGSRN. Residues threonine 314, lysine 345, threonine 346, and glycine 352 each coordinate 1D-myo-inositol 4-phosphate. A helical transmembrane segment spans residues 347 to 370; sequence LGIIMGTFILCWLPFFIVALVLPF. Topologically, residues 371 to 378 are extracellular; it reads CESSCHMP. A helical membrane pass occupies residues 379–403; the sequence is TLLGAIINWLGYSNSLLNPVIYAYF. Positions 396–400 match the NPxxY motif; important for ligand-induced conformation changes and signaling motif; that stretch reads NPVIY. 1D-myo-inositol 4-phosphate-binding residues include phenylalanine 403, asparagine 404, and lysine 405. Residues 404 to 422 are Cytoplasmic-facing; the sequence is NKDFQNAFKKIIKCKFCRQ.

It belongs to the G-protein coupled receptor 1 family. 5-hydroxytryptamine receptor subfamily. HTR1A sub-subfamily. In terms of assembly, heterodimer; heterodimerizes with GPER1. Interacts with YIF1B. Interacts with GPR39 and GALR1. In terms of tissue distribution, detected in lymph nodes, thymus and spleen. Detected in activated T-cells, but not in resting T-cells.

It is found in the cell membrane. It localises to the cell projection. Its subcellular location is the dendrite. G-protein coupled receptor activity is regulated by lipids: phosphatidylinositol 4-phosphate increases HTR1A-mediated activity. Binding to aripiprazol drug is regulated by cholesterol, which shapes the ligand-binding pocket, determining the specificity for aripiprazol. Activated by IHCH-7179 small molecule: IHCH-7179 acts both as an agonist activator for HTR1A and as an antagonist inhibitor for HTR2A. Activated by SEP-363856 small molecule: IHCH-7179 acts both as an agonist activator for HTR1A and TAAR1. Functionally, G-protein coupled receptor for 5-hydroxytryptamine (serotonin). Also functions as a receptor for various drugs and psychoactive substances. Ligand binding causes a conformation change that triggers signaling via guanine nucleotide-binding proteins (G proteins) and modulates the activity of downstream effectors, such as adenylate cyclase. HTR1A is coupled to G(i)/G(o) G alpha proteins and mediates inhibitory neurotransmission: signaling inhibits adenylate cyclase activity and activates a phosphatidylinositol-calcium second messenger system that regulates the release of Ca(2+) ions from intracellular stores. Beta-arrestin family members regulate signaling by mediating both receptor desensitization and resensitization processes. Plays a role in the regulation of 5-hydroxytryptamine release and in the regulation of dopamine and 5-hydroxytryptamine metabolism. Plays a role in the regulation of dopamine and 5-hydroxytryptamine levels in the brain, and thereby affects neural activity, mood and behavior. Plays a role in the response to anxiogenic stimuli. The sequence is that of 5-hydroxytryptamine receptor 1A from Homo sapiens (Human).